Here is a 623-residue protein sequence, read N- to C-terminus: Cilia- and flagella-associated protein 52 (623 aa).

WD repeat units lie at residues 65–109 (GHGN…LMAR), 112–153 (LHKG…AICG), 159–198 (LNVG…RKIW), 291–330 (QLQG…ETLI), 333–372 (CHFE…ELLR), 375–414 (VPNM…LMYV), 418–457 (AHRI…QKLE), 462–501 (EHKS…RNQM), 503–544 (LANT…RELD), 546–585 (SLSG…VTHV), and 588–623 (GHSG…PFPS).

It belongs to the CFAP52 family. In terms of assembly, microtubule inner protein component of sperm flagellar doublet microtubules. Interacts with BRCA2. Interacts with the CCT chaperonin complex. Interacts with HSP70. Interacts with AK8. Interacts with CFAP45. Interacts with DNAI1. Interacts with IQDC. In terms of tissue distribution, expressed in trachea multiciliated cells.

It is found in the cytoplasm. It localises to the cytoskeleton. The protein localises to the cilium axoneme. The protein resides in the flagellum axoneme. In terms of biological role, microtubule inner protein (MIP) part of the dynein-decorated doublet microtubules (DMTs) in cilia axoneme. Important for proper ciliary and flagellar beating. May act in cooperation with CFAP45 and axonemal dynein subunit DNAH11. May play a role in cell growth and/or survival. The polypeptide is Cilia- and flagella-associated protein 52 (CFAP52) (Bos taurus (Bovine)).